Here is a 466-residue protein sequence, read N- to C-terminus: Ribulose bisphosphate carboxylase large chain (466 aa).

N6,N6,N6-trimethyllysine is present on Lys5. Substrate is bound by residues Asn114 and Thr164. The Proton acceptor role is filled by Lys166. Substrate is bound at residue Lys168. Positions 192, 194, and 195 each coordinate Mg(2+). At Lys192 the chain carries N6-carboxylysine. The active-site Proton acceptor is the His285. Positions 286, 318, and 370 each coordinate substrate.

This sequence belongs to the RuBisCO large chain family. Type I subfamily. As to quaternary structure, heterohexadecamer of 8 large chains and 8 small chains; disulfide-linked. The disulfide link is formed within the large subunit homodimers. Requires Mg(2+) as cofactor. Post-translationally, the disulfide bond which can form in the large chain dimeric partners within the hexadecamer appears to be associated with oxidative stress and protein turnover.

The protein localises to the plastid. It is found in the chloroplast. It catalyses the reaction 2 (2R)-3-phosphoglycerate + 2 H(+) = D-ribulose 1,5-bisphosphate + CO2 + H2O. It carries out the reaction D-ribulose 1,5-bisphosphate + O2 = 2-phosphoglycolate + (2R)-3-phosphoglycerate + 2 H(+). RuBisCO catalyzes two reactions: the carboxylation of D-ribulose 1,5-bisphosphate, the primary event in carbon dioxide fixation, as well as the oxidative fragmentation of the pentose substrate in the photorespiration process. Both reactions occur simultaneously and in competition at the same active site. This chain is Ribulose bisphosphate carboxylase large chain, found in Silene gallica (Common catchfly).